We begin with the raw amino-acid sequence, 150 residues long: Large ribosomal subunit protein bL9 (150 aa).

It belongs to the bacterial ribosomal protein bL9 family.

In terms of biological role, binds to the 23S rRNA. The chain is Large ribosomal subunit protein bL9 from Neisseria gonorrhoeae (strain ATCC 700825 / FA 1090).